Here is a 519-residue protein sequence, read N- to C-terminus: uncharacterized protein (519 aa).

Basic residues predominate over residues 477–486 (IKRERAHVTQ). The segment at 477 to 519 (IKRERAHVTQRNKPPPSGGDTAVAEGFEPPDGVSRLSLSRRVH) is disordered.

This is an uncharacterized protein from Mycobacterium tuberculosis (strain ATCC 25618 / H37Rv).